A 465-amino-acid polypeptide reads, in one-letter code: Dihydrolipoyl dehydrogenase (465 aa).

Residues 34 to 42 (EEREAGGTC), lysine 51, and glycine 114 each bind FAD. Cysteines 42 and 47 form a disulfide. Residues 180 to 184 (GGGVI), glutamate 203, valine 237, and 264 to 267 (SIGR) contribute to the NAD(+) site. Positions 307 and 315 each coordinate FAD. The Proton acceptor role is filled by histidine 439.

It belongs to the class-I pyridine nucleotide-disulfide oxidoreductase family. FAD serves as cofactor.

Its subcellular location is the cytoplasm. The catalysed reaction is N(6)-[(R)-dihydrolipoyl]-L-lysyl-[protein] + NAD(+) = N(6)-[(R)-lipoyl]-L-lysyl-[protein] + NADH + H(+). In terms of biological role, the branched-chain alpha-keto dehydrogenase complex catalyzes the overall conversion of alpha-keto acids to acyl-CoA and CO(2). It contains multiple copies of 3 enzymatic components: branched-chain alpha-keto acid decarboxylase (E1), lipoamide acyltransferase (E2) and lipoamide dehydrogenase (E3). The chain is Dihydrolipoyl dehydrogenase (lpdA) from Chlamydia muridarum (strain MoPn / Nigg).